The sequence spans 227 residues: Urease accessory protein UreF 2 (227 aa).

This sequence belongs to the UreF family. In terms of assembly, ureD, UreF and UreG form a complex that acts as a GTP-hydrolysis-dependent molecular chaperone, activating the urease apoprotein by helping to assemble the nickel containing metallocenter of UreC. The UreE protein probably delivers the nickel.

The protein localises to the cytoplasm. Its function is as follows. Required for maturation of urease via the functional incorporation of the urease nickel metallocenter. The polypeptide is Urease accessory protein UreF 2 (Brucella anthropi (strain ATCC 49188 / DSM 6882 / CCUG 24695 / JCM 21032 / LMG 3331 / NBRC 15819 / NCTC 12168 / Alc 37) (Ochrobactrum anthropi)).